A 199-amino-acid polypeptide reads, in one-letter code: Pyridoxine/pyridoxamine 5'-phosphate oxidase (199 aa).

FMN-binding positions include 45–50, 60–61, R66, K67, and Q89; these read RVVLLK and FT. K50 provides a ligand contact to substrate. 3 residues coordinate substrate: Y107, R111, and S115. FMN contacts are provided by residues 124–125 and W169; that span reads QS. Residue 175 to 177 coordinates substrate; that stretch reads RIH. Residue R179 coordinates FMN.

This sequence belongs to the pyridoxamine 5'-phosphate oxidase family. In terms of assembly, homodimer. The cofactor is FMN.

It carries out the reaction pyridoxamine 5'-phosphate + O2 + H2O = pyridoxal 5'-phosphate + H2O2 + NH4(+). The catalysed reaction is pyridoxine 5'-phosphate + O2 = pyridoxal 5'-phosphate + H2O2. The protein operates within cofactor metabolism; pyridoxal 5'-phosphate salvage; pyridoxal 5'-phosphate from pyridoxamine 5'-phosphate: step 1/1. It participates in cofactor metabolism; pyridoxal 5'-phosphate salvage; pyridoxal 5'-phosphate from pyridoxine 5'-phosphate: step 1/1. In terms of biological role, catalyzes the oxidation of either pyridoxine 5'-phosphate (PNP) or pyridoxamine 5'-phosphate (PMP) into pyridoxal 5'-phosphate (PLP). The chain is Pyridoxine/pyridoxamine 5'-phosphate oxidase from Ehrlichia chaffeensis (strain ATCC CRL-10679 / Arkansas).